The chain runs to 906 residues: Alanine--tRNA ligase (906 aa).

Zn(2+)-binding residues include H600, H604, C703, and H707.

It belongs to the class-II aminoacyl-tRNA synthetase family. Homodimer. The cofactor is Zn(2+).

It is found in the cytoplasm. The enzyme catalyses tRNA(Ala) + L-alanine + ATP = L-alanyl-tRNA(Ala) + AMP + diphosphate. Functionally, catalyzes the attachment of alanine to tRNA(Ala) in a two-step reaction: alanine is first activated by ATP to form Ala-AMP and then transferred to the acceptor end of tRNA(Ala). Incorrectly charged aminoacyl-tRNA(Ala) is also edited in situ by the editing domain. In Archaeoglobus fulgidus (strain ATCC 49558 / DSM 4304 / JCM 9628 / NBRC 100126 / VC-16), this protein is Alanine--tRNA ligase (alaS).